The following is a 227-amino-acid chain: ATP phosphoribosyltransferase (227 aa).

The protein belongs to the ATP phosphoribosyltransferase family. Short subfamily. Heteromultimer composed of HisG and HisZ subunits.

Its subcellular location is the cytoplasm. It carries out the reaction 1-(5-phospho-beta-D-ribosyl)-ATP + diphosphate = 5-phospho-alpha-D-ribose 1-diphosphate + ATP. It participates in amino-acid biosynthesis; L-histidine biosynthesis; L-histidine from 5-phospho-alpha-D-ribose 1-diphosphate: step 1/9. In terms of biological role, catalyzes the condensation of ATP and 5-phosphoribose 1-diphosphate to form N'-(5'-phosphoribosyl)-ATP (PR-ATP). Has a crucial role in the pathway because the rate of histidine biosynthesis seems to be controlled primarily by regulation of HisG enzymatic activity. The chain is ATP phosphoribosyltransferase from Bordetella avium (strain 197N).